Consider the following 254-residue polypeptide: Activity-regulated cytoskeleton associated protein 1 (254 aa).

It belongs to the ARC/ARG3.1 family. In terms of assembly, homooligomer; homooligomerizes into virion-like capsids. In terms of tissue distribution, expressed in a specific population of brain neurons, named E347, that are necessary and sufficient for proper body fat storage.

The protein localises to the extracellular vesicle membrane. Its subcellular location is the synapse. Its function is as follows. Master regulator of synaptic plasticity that self-assembles into virion-like capsids that encapsulate RNAs and mediate intercellular RNA transfer from motorneurons to muscles. Arc1 protein is released from motorneurons in extracellular vesicles that mediate the transfer of Arc1 mRNA into muscle cells, where Arc1 mRNA can undergo activity-dependent translation. Intercellular transfer od Arc1 mRNA is required for synaptic plasticity at the neuromuscular junction. May play a role in energy balance: required for regulation of body fat by a specific population of brain neurons, named E347, that are necessary and sufficient for proper body fat storage. This is Activity-regulated cytoskeleton associated protein 1 from Drosophila melanogaster (Fruit fly).